A 568-amino-acid polypeptide reads, in one-letter code: Lariat debranching enzyme (568 aa).

Residues cysteine 8, histidine 10, aspartate 39, and asparagine 84 each coordinate a divalent metal cation. Positions serine 124–arginine 154 are lariat recognition loop. A divalent metal cation contacts are provided by histidine 174, histidine 226, and histidine 228. The segment at isoleucine 388 to serine 568 is disordered. Residues proline 417–asparagine 428 are compositionally biased toward polar residues. Positions isoleucine 432–glycine 444 are enriched in acidic residues. Residues aspartate 467–lysine 480 show a composition bias toward basic and acidic residues. At threonine 478 the chain carries Phosphothreonine. Over residues glycine 534–glutamine 549 the composition is skewed to low complexity. The residue at position 568 (serine 568) is a Phosphoserine.

The protein belongs to the lariat debranching enzyme family. Fe(2+) is required as a cofactor. Zn(2+) serves as cofactor. It depends on Mn(2+) as a cofactor.

It localises to the nucleus. Active in presence of diverse metals including Fe(2+), Zn(2+), Mn(2+). Also activated by Ca(2+). Binds two metal cations in two adjacent alpha and beta metal-binding pockets. Its function is as follows. Cleaves the 2'-5' phosphodiester linkage at the branch point of excised lariat intron RNA and converts them into linear molecules that can be subsequently degraded, thereby facilitating ribonucleotide turnover. Linked to its role in pre-mRNA processing mechanism, may also participate in retrovirus replication and have an antiviral cell-intrinsic defense function. This chain is Lariat debranching enzyme (dbr1), found in Danio rerio (Zebrafish).